The primary structure comprises 196 residues: NADH-quinone oxidoreductase subunit B (196 aa).

Residues Cys-63, Cys-64, Cys-129, and Cys-159 each coordinate [4Fe-4S] cluster.

The protein belongs to the complex I 20 kDa subunit family. NDH-1 is composed of 14 different subunits. Subunits NuoB, C, D, E, F, and G constitute the peripheral sector of the complex. Requires [4Fe-4S] cluster as cofactor.

It localises to the cell inner membrane. The enzyme catalyses a quinone + NADH + 5 H(+)(in) = a quinol + NAD(+) + 4 H(+)(out). Functionally, NDH-1 shuttles electrons from NADH, via FMN and iron-sulfur (Fe-S) centers, to quinones in the respiratory chain. The immediate electron acceptor for the enzyme in this species is believed to be a menaquinone. Couples the redox reaction to proton translocation (for every two electrons transferred, four hydrogen ions are translocated across the cytoplasmic membrane), and thus conserves the redox energy in a proton gradient. The chain is NADH-quinone oxidoreductase subunit B from Bacteroides fragilis (strain ATCC 25285 / DSM 2151 / CCUG 4856 / JCM 11019 / LMG 10263 / NCTC 9343 / Onslow / VPI 2553 / EN-2).